The following is a 355-amino-acid chain: MISYPFFSLSPPGLVPPPMAVPPVEMYSGSFWNRMRKPLPLRTQVIRFTVVFVIVSFILAVALQITHERMPDPKVTKPLPDLGFELLTKISFLSVVTDVLIAFLSSLSFFTLWKLYLLHRHCVGSGEPELPCNIPGVSRFFLSVWLCKENCRIELRNVHTIAWIRFITSYALLLLFRSLVIVMTSMPTPVDKCQNPPKIENPVKNVILTVLTAGGGSIHCGDLMYSGHTVILTLHLMFHWIYGAMVHWSFRPVVTVVAIFGYYCIVASRSHYTDDVLVAIYLTIATFIAVGHNADGAPWQLQLFIRWLPCCGANSREVTEDSQPVMVAFKSEAVDELRERDDSAGLSCEVSTNEV.

The Cytoplasmic portion of the chain corresponds to 1–44 (MISYPFFSLSPPGLVPPPMAVPPVEMYSGSFWNRMRKPLPLRTQ). A helical membrane pass occupies residues 45–65 (VIRFTVVFVIVSFILAVALQI). Topologically, residues 66–89 (THERMPDPKVTKPLPDLGFELLTK) are extracellular. Residues 90 to 110 (ISFLSVVTDVLIAFLSSLSFF) form a helical membrane-spanning segment. The Cytoplasmic segment spans residues 111–165 (TLWKLYLLHRHCVGSGEPELPCNIPGVSRFFLSVWLCKENCRIELRNVHTIAWIR). The chain crosses the membrane as a helical span at residues 166 to 186 (FITSYALLLLFRSLVIVMTSM). At 187-205 (PTPVDKCQNPPKIENPVKN) the chain is on the extracellular side. The helical transmembrane segment at 206 to 226 (VILTVLTAGGGSIHCGDLMYS) threads the bilayer. Topologically, residues 227–251 (GHTVILTLHLMFHWIYGAMVHWSFR) are cytoplasmic. Catalysis depends on residues histidine 228, histidine 271, and aspartate 275. A helical membrane pass occupies residues 252–272 (PVVTVVAIFGYYCIVASRSHY). Residues 273–275 (TDD) lie on the Extracellular side of the membrane. The chain crosses the membrane as a helical span at residues 276 to 296 (VLVAIYLTIATFIAVGHNADG). At 297–355 (APWQLQLFIRWLPCCGANSREVTEDSQPVMVAFKSEAVDELRERDDSAGLSCEVSTNEV) the chain is on the cytoplasmic side.

It belongs to the sphingomyelin synthase family.

It localises to the membrane. In terms of biological role, bidirectional lipid inositolphosphotransferase capable of converting phosphatidylinositol (PI) and ceramide to inositol-phosphorylceramide (IPC) and diacylglycerol (DAG) and vice versa. Direction is dependent on the relative concentrations of DAG and ceramide as phosphoinositol acceptors. Does not function strictly as a SM synthase. Essential for viability of the pathogenic bloodstream stage of this human protozoan parasite and, consequently, can be considered as potential drug target. The sequence is that of Phosphatidylinositol:ceramide inositolphosphotransferase from Trypanosoma brucei brucei (strain 927/4 GUTat10.1).